Consider the following 441-residue polypeptide: Xaa-Pro dipeptidase (441 aa).

Residues aspartate 244, aspartate 255, histidine 336, glutamate 381, and glutamate 420 each contribute to the Mn(2+) site.

This sequence belongs to the peptidase M24B family. Bacterial-type prolidase subfamily. Mn(2+) serves as cofactor.

The catalysed reaction is Xaa-L-Pro dipeptide + H2O = an L-alpha-amino acid + L-proline. Its function is as follows. Splits dipeptides with a prolyl residue in the C-terminal position. The sequence is that of Xaa-Pro dipeptidase from Xanthomonas euvesicatoria pv. vesicatoria (strain 85-10) (Xanthomonas campestris pv. vesicatoria).